Consider the following 737-residue polypeptide: Angiotensin-converting enzyme-like protein Ace3 (737 aa).

The signal sequence occupies residues 1–23 (MNLPWALLLVLLSHRQLLPWLRT). The Extracellular segment spans residues 24 to 639 (VGETSLNDFY…TDTEPEQAYL (616 aa)). One can recognise a Peptidase M2 domain in the interval 32 to 611 (FYSEAQAKLF…VKQGDTLGWP (580 aa)). An intrachain disulfide couples C146 to C152. 2 residues coordinate chloride: R180 and Y218. An intrachain disulfide couples C346 to C364. 2 residues coordinate Zn(2+): H377 and H381. An N-linked (GlcNAc...) asparagine glycan is attached at N390. Position 405 (E405) interacts with Zn(2+). W479, R483, and R516 together coordinate chloride. C532 and C544 form a disulfide bridge. The helical transmembrane segment at 640 to 660 (GQWVLLSMSFFMLVLILALGF) threads the bilayer. Topologically, residues 661 to 700 (RLHYLEKQLLDEDTMILKTLPYSYFLGIAMEPHQAARKQW) are cytoplasmic. A helical membrane pass occupies residues 701 to 721 (LLLGLCCILMLCCIGLLIRIV). The Extracellular segment spans residues 722–737 (TQNTENTPWMKNEGQS).

It belongs to the peptidase M2 family. Interacts with IZUMO1. Zn(2+) serves as cofactor. Expressed in sperm and testis (at protein level). Expressed in heart and testis. Not detected in kidney, lung, liver, brain, ovary, spleen and thymus.

It is found in the cytoplasmic vesicle. It localises to the secretory vesicle. Its subcellular location is the acrosome membrane. This is Angiotensin-converting enzyme-like protein Ace3 from Mus musculus (Mouse).